The following is a 594-amino-acid chain: SHC-transforming protein 3 (594 aa).

The disordered stretch occupies residues 98–147; it reads GSCSAPSLAAPDGSAPSAPRAPAMSAARKGRPGDEPLPRPPRGAPHASDQ. Residues 101 to 124 are compositionally biased toward low complexity; it reads SAPSLAAPDGSAPSAPRAPAMSAA. The PID domain occupies 149–334; the sequence is LGPGVTYVVK…LDEPWTEEEG (186 aa). A CH1 region spans residues 335-498; it reads DGSDHPYYNS…KMLEELQAET (164 aa). Disordered regions lie at residues 351 to 373 and 386 to 405; these read PPGGFLDTRLKPRPHAPDTAQFA and GDTFGEDWQQTPLRQGSSDI. A compositionally biased stretch (polar residues) spans 393 to 405; sequence WQQTPLRQGSSDI. Serine 402 carries the phosphoserine modification. Residues 499–590 enclose the SH2 domain; that stretch reads WYQGEMSRKE…GSELCLQQPV (92 aa).

As to quaternary structure, interacts with the Trk receptors in a phosphotyrosine-dependent manner. Once activated, binds to GRB2. Interacts with activated EGF receptors. Post-translationally, tyrosine phosphorylated. In terms of tissue distribution, mainly expressed in brain. Hardly detectable in other tissues, except in pancreas. Highly expressed in the cerebral cortex, frontal and temporal lobes, occipital pole, hippocampus, caudate nucleus and amygdala. Expressed at low level in the cerebellum, medulla and spinal cord.

In terms of biological role, signaling adapter that couples activated growth factor receptors to signaling pathway in neurons. Involved in the signal transduction pathways of neurotrophin-activated Trk receptors in cortical neurons. This is SHC-transforming protein 3 (SHC3) from Homo sapiens (Human).